The sequence spans 310 residues: MKITVIGAGNVGATTAFRLAEKQLARELVLLDVVEGIPQGKALDMYESGPVGLFDTKVTGSNDYADTANSDIVVITAGLPRKPGMTREDLLSMNAGIVREVTGRIMEHSKNPIIVVVSNPLDIMTHVAWQKSGLPKERVIGMAGVLDSARFRSFIAMELGVSMQDVTACVLGGHGDAMVPVVKYTTVAGIPVADLISAERIAELVERTRTGGAEIVNHLKQGSAFYAPATSVVEMVESIVLDRKRVLTCAVSLDGQYGIDGTFVGVPVKLGKNGVEHIYEIKLDQSDLDLLQKSAKIVDENCKMLDASQG.

NAD(+) contacts are provided by residues 7–12 (GAGNVG) and aspartate 32. Arginine 81 and arginine 87 together coordinate substrate. Residues asparagine 94 and 117-119 (VSN) each bind NAD(+). The substrate site is built by asparagine 119 and arginine 150. The active-site Proton acceptor is histidine 174.

Belongs to the LDH/MDH superfamily. MDH type 3 family. As to quaternary structure, homotetramer; arranged as a dimer of dimers.

It carries out the reaction (S)-malate + NAD(+) = oxaloacetate + NADH + H(+). In terms of biological role, catalyzes the reversible oxidation of malate to oxaloacetate. The protein is Malate dehydrogenase of Chlorobaculum tepidum (strain ATCC 49652 / DSM 12025 / NBRC 103806 / TLS) (Chlorobium tepidum).